The sequence spans 175 residues: Nucleoside-triphosphatase THEP1 (175 aa).

Residues 15–22 (GNPGVGKT) and 106–113 (VLAIDEIG) each bind ATP.

It belongs to the THEP1 NTPase family.

The enzyme catalyses a ribonucleoside 5'-triphosphate + H2O = a ribonucleoside 5'-diphosphate + phosphate + H(+). Its function is as follows. Has nucleotide phosphatase activity towards ATP, GTP, CTP, TTP and UTP. May hydrolyze nucleoside diphosphates with lower efficiency. The sequence is that of Nucleoside-triphosphatase THEP1 from Saccharolobus solfataricus (strain ATCC 35092 / DSM 1617 / JCM 11322 / P2) (Sulfolobus solfataricus).